Reading from the N-terminus, the 99-residue chain is MTDTALIAELWDVIVDRRLHPVEGSYVNSLLSHRKGIDKPLEKVGEEATEFILAVKNGESDRIAEEAADLLFHMLVALNAADVDLSLVLDELASRRRSR.

This sequence belongs to the PRA-PH family.

It localises to the cytoplasm. It carries out the reaction 1-(5-phospho-beta-D-ribosyl)-ATP + H2O = 1-(5-phospho-beta-D-ribosyl)-5'-AMP + diphosphate + H(+). The protein operates within amino-acid biosynthesis; L-histidine biosynthesis; L-histidine from 5-phospho-alpha-D-ribose 1-diphosphate: step 2/9. This Methanosphaerula palustris (strain ATCC BAA-1556 / DSM 19958 / E1-9c) protein is Phosphoribosyl-ATP pyrophosphatase.